A 177-amino-acid polypeptide reads, in one-letter code: Large ribosomal subunit protein uL6 (177 aa).

Belongs to the universal ribosomal protein uL6 family. Part of the 50S ribosomal subunit.

This protein binds to the 23S rRNA, and is important in its secondary structure. It is located near the subunit interface in the base of the L7/L12 stalk, and near the tRNA binding site of the peptidyltransferase center. The chain is Large ribosomal subunit protein uL6 from Herminiimonas arsenicoxydans.